We begin with the raw amino-acid sequence, 764 residues long: Complement factor B (764 aa).

The N-terminal stretch at 1–25 is a signal peptide; sequence MGSNLSPQLCLMPFILGLLSGGVTT. 3 consecutive Sushi domains span residues 35–100, 101–160, and 163–220; these read GSCS…ECRA, IHCP…ICDN, and GYCS…SCQD. 6 disulfides stabilise this stretch: C37/C76, C62/C98, C103/C145, C131/C158, C165/C205, and C191/C218. N122 and N142 each carry an N-linked (GlcNAc...) asparagine glycan. The VWFA domain occupies 270-469; it reads NIYLVLDGSD…NLEDVFYQMI (200 aa). Mg(2+) contacts are provided by S278 and S280. A glycan (N-linked (GlcNAc...) asparagine) is linked at N285. T353 serves as a coordination point for Mg(2+). N378 carries an N-linked (GlcNAc...) asparagine glycan. The Peptidase S1 domain maps to 477 to 757; it reads LCGMVWEHRK…VLPWLKEKLQ (281 aa). 5 disulfides stabilise this stretch: C478-C596, C511-C527, C599-C615, C656-C682, and C695-C725. Residues H526 and D576 each act as charge relay system in the active site. S699 acts as the Charge relay system in catalysis.

This sequence belongs to the peptidase S1 family. In terms of assembly, monomer. Interacts with complement C3b; this interaction is dependent on the presence of Mg(2+). As to quaternary structure, catalytic component of the C3 convertase of the alternative complement pathway, also named C3bBb, composed of complement factor B Bb and complement C3b. Catalytic component of the C5 convertase of the alternative complement pathway, also named C3bBb3b, composed of complement factor B Bb and additional molecules of complement C3b. Interacts to CFP; this interaction contributes to the stabilization of the active C3-convertase enzyme complex. Mg(2+) serves as cofactor. Mn(2+) is required as a cofactor. In terms of processing, cleaved by CFD following activation of the alternative complement system, generating Ba and Bb chains. Cleavage and activation takes place when CFB is already associated with complement C3b.

It is found in the secreted. The protein resides in the cell surface. The catalysed reaction is Cleavage of Arg-|-Ser bond in complement component C3 alpha-chain to yield C3a and C3b, and Arg-|-Xaa bond in complement component C5 alpha-chain to yield C5a and C5b.. Its function is as follows. Precursor of the catalytic component of the C3 and C5 convertase complexes of the alternative pathway of the complement system, a cascade of proteins that leads to phagocytosis and breakdown of pathogens and signaling that strengthens the adaptive immune system. The alternative complement pathway acts as an amplification loop that enhances other complement pathways (classical, lectin and GZMK) by promoting formation of additional C3 and C5 convertases. CFB is cleaved and activated by CFD to generate Ba and Bb chains; Bb chain constituting the catalytic component of the C3 and C5 convertases. In terms of biological role, serine protease component of the complement C3 and C5 convertase complexes of the alternative complement pathway. Following cleavage and activation by factor D (CFD), forms the C3 convertase together with complement C3b. As part of the C3 convertase, cleaves and activates C3 into C3a anaphylatoxin and C3b opsonin, the next components of the complement pathways. When an additional complement C3b molecule binds to the C3 convertase, forms the C5 convertase, which cleaves and activates C5 into C5a anaphylatoxin and C5b component of the membrane attack complex. Functionally, involved in proliferation and differentiation of preactivated B-lymphocytes, rapid spreading of peripheral blood monocytes, stimulation of lymphocyte blastogenesis and lysis of erythrocytes. This chain is Complement factor B (CFB), found in Gorilla gorilla gorilla (Western lowland gorilla).